The sequence spans 308 residues: Probable GTP 3',8-cyclase (308 aa).

Residues 4–224 (RFGRPLEDLR…QIRKKHFRPR (221 aa)) enclose the Radical SAM core domain. R13 provides a ligand contact to GTP. [4Fe-4S] cluster-binding residues include C20, C24, and C27. GTP is bound at residue K60. G64 serves as a coordination point for S-adenosyl-L-methionine. T90 is a GTP binding site. S114 is an S-adenosyl-L-methionine binding site. K151 is a binding site for GTP. [4Fe-4S] cluster-binding residues include C245 and C248. 250–252 (RIR) provides a ligand contact to GTP. Residue C262 participates in [4Fe-4S] cluster binding.

This sequence belongs to the radical SAM superfamily. MoaA family. [4Fe-4S] cluster serves as cofactor.

The catalysed reaction is GTP + AH2 + S-adenosyl-L-methionine = (8S)-3',8-cyclo-7,8-dihydroguanosine 5'-triphosphate + 5'-deoxyadenosine + L-methionine + A + H(+). It participates in cofactor biosynthesis; molybdopterin biosynthesis. Its function is as follows. Catalyzes the cyclization of GTP to (8S)-3',8-cyclo-7,8-dihydroguanosine 5'-triphosphate. The chain is Probable GTP 3',8-cyclase from Saccharolobus islandicus (strain L.S.2.15 / Lassen #1) (Sulfolobus islandicus).